The primary structure comprises 1241 residues: Nephrin (1241 aa).

The N-terminal stretch at 1 to 22 is a signal peptide; that stretch reads MALGTTLRASLLLLGLLTEGLA. Over 23 to 1055 the chain is Extracellular; that stretch reads QLAIPASVPR…EDQLPTEPPS (1033 aa). 6 consecutive Ig-like C2-type domains span residues 27–130, 143–234, 242–333, 340–434, 440–540, and 544–635; these read PASV…VILS, EAGT…SFTV, PPVI…HGIT, PSAI…KSLI, PAQK…TQLA, and PPTN…ETVS. Asparagine 40 carries an N-linked (GlcNAc...) asparagine glycan. 3 cysteine pairs are disulfide-bonded: cysteine 53–cysteine 111, cysteine 160–cysteine 217, and cysteine 265–cysteine 317. N-linked (GlcNAc...) asparagine glycans are attached at residues asparagine 356 and asparagine 401. Cysteine 361 and cysteine 417 are oxidised to a cystine. Serine 432 carries the phosphoserine modification. A disulfide bridge links cysteine 465 with cysteine 528. Residues asparagine 547, asparagine 553, asparagine 564, asparagine 577, asparagine 680, and asparagine 708 are each glycosylated (N-linked (GlcNAc...) asparagine). An intrachain disulfide couples cysteine 567 to cysteine 623. 2 Ig-like C2-type domains span residues 740 to 832 and 838 to 939; these read PTIR…LLRL and PQVE…VSIS. Cystine bridges form between cysteine 761–cysteine 816 and cysteine 863–cysteine 920. Asparagine 908 carries N-linked (GlcNAc...) asparagine glycosylation. A Fibronectin type-III domain is found at 943 to 1038; that stretch reads PPSGLKVVSL…TQLPITTPGL (96 aa). The tract at residues 1025–1057 is disordered; it reads ADKGTQLPITTPGLHQPSGEPEDQLPTEPPSGP. The helical transmembrane segment at 1056–1076 threads the bilayer; the sequence is GPSGLPLLPVLFALGGLLLLS. At 1077-1241 the chain is on the cytoplasmic side; that stretch reads NASCVGGVLW…LPFELRGHLV (165 aa). At serine 1098 the chain carries Phosphoserine. Basic and acidic residues predominate over residues 1099-1114; that stretch reads EKTEAGSEEDRVRNEY. The tract at residues 1099–1137 is disordered; sequence EKTEAGSEEDRVRNEYEESQWTGERDTQSSTVSTTEAEP. Threonine 1101 is subject to Phosphothreonine. Residue serine 1105 is modified to Phosphoserine. The binds to NPHS2 stretch occupies residues 1160-1241; the sequence is RGFTGEDEDM…LPFELRGHLV (82 aa). Residue tyrosine 1193 is modified to Phosphotyrosine; by FYN.

Belongs to the immunoglobulin superfamily. As to quaternary structure, interacts with CD2AP (via C-terminal domain). Interacts with MAGI1 (via PDZ 2 and 3 domains) forming a tripartite complex with IGSF5/JAM4. Interacts with DDN; the interaction is direct. Self-associates (via the Ig-like domains). Also interacts (via the Ig-like domains) with KIRREL1/NEPH1 and KIRREL2; the interaction with KIRREL1 is dependent on KIRREL1 glycosylation. Interacts with KIRREL3. Forms a complex with ACTN4, CASK, IQGAP1, MAGI2, SPTAN1 and SPTBN1. Interacts with NPHS2. Interacts with phosphatidylinositol 3-kinase regulatory subunit PIK3R1; the interaction is reduced by high glucose levels. Post-translationally, phosphorylated at Tyr-1193 by FYN, leading to the recruitment and activation of phospholipase C-gamma-1/PLCG1. Tyrosine phosphorylation is reduced by high glucose levels. Dephosphorylated by tensin TNS2 which leads to reduced binding of NPHN1 to PIK3R1. In terms of tissue distribution, specifically expressed in podocytes of kidney glomeruli.

Its subcellular location is the cell membrane. Seems to play a role in the development or function of the kidney glomerular filtration barrier. Regulates glomerular vascular permeability. May anchor the podocyte slit diaphragm to the actin cytoskeleton. Plays a role in skeletal muscle formation through regulation of myoblast fusion. In Homo sapiens (Human), this protein is Nephrin (NPHS1).